The primary structure comprises 948 residues: MMSSNILSRFLPPTGSPSVYETIRQHDAGSEYSDLEERAGLVIEDQQEQYSDRELEDALADAQDSEIVSPSTALLNQARSVKAPEERASPSGTRRRKSSRPRWMAQESPLGYELDDHDEDVPQSLLVEGHHEDLKPRLPPPPQSHNRSDRRRTPSPGPSSRPTEARWNERGVHQQPPPSESGHPIGRWFTGQHPGLANVDPKKKAMWRWANVEDLDNFLKDVYVYFLGNGIWSILLTRVLNLLTFAFVVGFSTFLTNCIDYPKVRRSKTLNDILVPQCTANMSGSSTFLLWLFSFFWIGKLFQYLLDIRRLKHLHDFYLYLLGVSDAEVQTISWQEVVSRLMALRDSNPSTAAAVSAKHRRFLGSQSKQRMDAHDIANRLMRKENYMIALVNKDILDLTLPIPFLKNRQLFSRTMEWNLNLCVMDYVFNEQGQLRTLFLKDTHRRALSDGLRRRFIFAGVMNIFVAPFIVVYFMMHYFFRYFNEFKKNPGQIGSRQYTPMAEWKFREFNELWHLFERRINMSYPFASRYIDQFPKDKTVQVARFVAFISGALASVLALASVIDPELFLGFEITHDRTVLFYLGIFGTVWAFARGLAPEETDVFDPEYALLELIDFTHYFPSGWKGRLHSDDVRKEFAILYQMKIVIFLEEILSMIFTPFVLWFSLPKCSDRLIDFFREFTVHVDGVGYLCSFAVFDFKKGTNVLSQAGPGRRDPGKQDLRTDYFSTKDGKMLASYYGFLDNYGTTHQATSRRPFHPPPTLPTLGSPTAGGFGALPDRPDHLQTRLGPTPGAPFGPQSMIGTSKPRQMGGFDHRSPAPSILLDPHHQPSTTGFRAAARIAPQQHQRSRLGRSHHPSTDPIDDEEEPLSQDGHDSTTRQSGARTGTSSAGAGTSDSNLGDSWRMNPLSNDEDEGDEGENIDAIAGGGGVLGLIQQFQKANTEGRRTNVGI.

3 disordered regions span residues 1-20 (MMSS…PSVY), 46-104 (QQEQ…PRWM), and 130-193 (HHED…TGQH). Over 1-230 (MMSSNILSRF…DVYVYFLGNG (230 aa)) the chain is Cytoplasmic. The segment covering 66-79 (EIVSPSTALLNQAR) has biased composition (polar residues). Over residues 163–172 (TEARWNERGV) the composition is skewed to basic and acidic residues. A helical membrane pass occupies residues 231–251 (IWSILLTRVLNLLTFAFVVGF). Over 252 to 287 (STFLTNCIDYPKVRRSKTLNDILVPQCTANMSGSST) the chain is Lumenal. A helical transmembrane segment spans residues 288–308 (FLLWLFSFFWIGKLFQYLLDI). The Cytoplasmic portion of the chain corresponds to 309–454 (RRLKHLHDFY…RALSDGLRRR (146 aa)). Residues 455–475 (FIFAGVMNIFVAPFIVVYFMM) lie within the membrane without spanning it. At 476-543 (HYFFRYFNEF…PKDKTVQVAR (68 aa)) the chain is on the cytoplasmic side. The helical transmembrane segment at 544–564 (FVAFISGALASVLALASVIDP) threads the bilayer. Topologically, residues 565–576 (ELFLGFEITHDR) are lumenal. The chain crosses the membrane as a helical span at residues 577–597 (TVLFYLGIFGTVWAFARGLAP). The Cytoplasmic segment spans residues 598-643 (EETDVFDPEYALLELIDFTHYFPSGWKGRLHSDDVRKEFAILYQMK). An intramembrane segment occupies 644-664 (IVIFLEEILSMIFTPFVLWFS). At 665-948 (LPKCSDRLID…TEGRRTNVGI (284 aa)) the chain is on the cytoplasmic side. The tract at residues 762–923 (TLGSPTAGGF…EGENIDAIAG (162 aa)) is disordered. A compositionally biased stretch (basic residues) spans 844 to 853 (QRSRLGRSHH). Over residues 878–892 (SGARTGTSSAGAGTS) the composition is skewed to low complexity. Acidic residues predominate over residues 907-917 (NDEDEGDEGEN).

It belongs to the ATG9 family. Homotrimer; forms a homotrimer with a central pore that forms a path between the two membrane leaflets. Phosphorylated by atg1. Atg1 phosphorylation is required for preautophagosome elongation.

Its subcellular location is the preautophagosomal structure membrane. It is found in the cytoplasmic vesicle membrane. The protein localises to the golgi apparatus membrane. It localises to the endoplasmic reticulum membrane. The enzyme catalyses a 1,2-diacyl-sn-glycero-3-phosphocholine(in) = a 1,2-diacyl-sn-glycero-3-phosphocholine(out). It carries out the reaction a 1,2-diacyl-sn-glycero-3-phospho-L-serine(in) = a 1,2-diacyl-sn-glycero-3-phospho-L-serine(out). The catalysed reaction is a 1,2-diacyl-sn-glycero-3-phosphoethanolamine(in) = a 1,2-diacyl-sn-glycero-3-phosphoethanolamine(out). It catalyses the reaction a 1,2-diacyl-sn-glycero-3-phospho-(1D-myo-inositol-3-phosphate)(in) = a 1,2-diacyl-sn-glycero-3-phospho-(1D-myo-inositol-3-phosphate)(out). Its function is as follows. Phospholipid scramblase involved in autophagy and cytoplasm to vacuole transport (Cvt) vesicle formation. Cycles between the preautophagosomal structure/phagophore assembly site (PAS) and the cytoplasmic vesicle pool and supplies membrane for the growing autophagosome. Lipid scramblase activity plays a key role in preautophagosomal structure/phagophore assembly by distributing the phospholipids that arrive through atg2 from the cytoplasmic to the luminal leaflet of the bilayer, thereby driving autophagosomal membrane expansion. Required for mitophagy. Also involved in endoplasmic reticulum-specific autophagic process and is essential for the survival of cells subjected to severe ER stress. Different machineries are required for anterograde trafficking to the PAS during either the Cvt pathway or bulk autophagy and for retrograde trafficking. The polypeptide is Autophagy-related protein 9 (atg9) (Penicillium rubens (strain ATCC 28089 / DSM 1075 / NRRL 1951 / Wisconsin 54-1255) (Penicillium chrysogenum)).